Reading from the N-terminus, the 47-residue chain is Conotoxin Cal6.18 (47 aa).

The N-terminal stretch at 1–19 (MKLTYVLIVAMLVLVVCRA) is a signal peptide.

It belongs to the conotoxin O1 superfamily. In terms of processing, may contain 3 disulfide bonds. In terms of tissue distribution, expressed by the venom duct.

It localises to the secreted. Functionally, probable neurotoxin. The protein is Conotoxin Cal6.18 of Californiconus californicus (California cone).